The following is a 470-amino-acid chain: Cell division protein FtsA (470 aa).

The disordered stretch occupies residues 416–470 (NKKDTHENEVESTDEEIYQSEDNHQEHKQNHEHVQDKDKDKEESKFKKLMKSLFE). Over residues 425–434 (VESTDEEIYQ) the composition is skewed to acidic residues. Residues 436-461 (EDNHQEHKQNHEHVQDKDKDKEESKF) show a composition bias toward basic and acidic residues.

Belongs to the FtsA/MreB family. In terms of assembly, self-interacts. Interacts with FtsZ.

Its subcellular location is the cell membrane. Its function is as follows. Cell division protein that is involved in the assembly of the Z ring. May serve as a membrane anchor for the Z ring. In Staphylococcus aureus (strain MSSA476), this protein is Cell division protein FtsA.